An 86-amino-acid chain; its full sequence is Large ribosomal subunit protein bL27 (86 aa).

The segment at 1 to 20 is disordered; sequence MAHKKAGGSSRNGRDSESKR.

It belongs to the bacterial ribosomal protein bL27 family.

The chain is Large ribosomal subunit protein bL27 from Paraburkholderia phymatum (strain DSM 17167 / CIP 108236 / LMG 21445 / STM815) (Burkholderia phymatum).